The chain runs to 555 residues: Carboxylic ester hydrolase (555 aa).

The N-terminal stretch at 1–19 (MELSVIALLLLGFVNFSWQ) is a signal peptide. A disulfide bond links C86 and C107. 2 N-linked (GlcNAc...) asparagine glycosylation sites follow: N120 and N144. S211 acts as the Acyl-ester intermediate in catalysis. A disulfide bond links C263 and C274. E336 functions as the Charge relay system in the catalytic mechanism. N369 and N397 each carry an N-linked (GlcNAc...) asparagine glycan. H459 serves as the catalytic Charge relay system. N-linked (GlcNAc...) asparagine glycosylation is found at N473 and N533.

Belongs to the type-B carboxylesterase/lipase family. In terms of processing, N-glycosylated. Expressed in several tissues, including epidermis (at protein level), fat body (at protein level), gut (at protein level), muscle (at protein level), and venom gland (at protein level).

Its subcellular location is the secreted. It catalyses the reaction a carboxylic ester + H2O = an alcohol + a carboxylate + H(+). Functionally, lipolytic agent that may be involved in distributing the venom via degradation of blood triglycerides. The recombinant protein degrades triglycerides and exhibits high lipolytic activity toward long-chain triglycerides (tested on tributyrin, trioctanoin and triolein). Does not affect mammalian cells. This Bombus ignitus (Bumblebee) protein is Carboxylic ester hydrolase (vCaE).